Here is a 491-residue protein sequence, read N- to C-terminus: NADH-quinone oxidoreductase subunit N 1 (491 aa).

14 helical membrane-spanning segments follow: residues 9–29 (IAAP…LDLL), 38–58 (PMYV…VPLW), 76–96 (FAAV…LLSF), 104–124 (SGYL…GGAG), 126–146 (LMVI…MIAF), 161–181 (FVLG…IYGA), 211–231 (VGVG…PFHI), 246–266 (AFMA…LLVA), 276–296 (FLLP…TVGI), 304–324 (LMAY…PGLG), 329–349 (SAAA…FAVV), 375–395 (VGVC…TGGF), 410–432 (AWIV…LKVI), and 461–481 (VVLA…GPVS).

This sequence belongs to the complex I subunit 2 family. In terms of assembly, NDH-1 is composed of 14 different subunits. Subunits NuoA, H, J, K, L, M, N constitute the membrane sector of the complex.

It localises to the cell membrane. It catalyses the reaction a quinone + NADH + 5 H(+)(in) = a quinol + NAD(+) + 4 H(+)(out). Functionally, NDH-1 shuttles electrons from NADH, via FMN and iron-sulfur (Fe-S) centers, to quinones in the respiratory chain. The immediate electron acceptor for the enzyme in this species is believed to be a menaquinone. Couples the redox reaction to proton translocation (for every two electrons transferred, four hydrogen ions are translocated across the cytoplasmic membrane), and thus conserves the redox energy in a proton gradient. The polypeptide is NADH-quinone oxidoreductase subunit N 1 (Symbiobacterium thermophilum (strain DSM 24528 / JCM 14929 / IAM 14863 / T)).